The following is a 465-amino-acid chain: Alpha-2A adrenergic receptor (465 aa).

Residues 1 to 48 (MFRQEQPLAEGSFAPMGSLQPEAGNASWNGTEAPGGGARATPYSLQVT) lie on the Extracellular side of the membrane. Residues Asn25 and Asn29 are each glycosylated (N-linked (GlcNAc...) asparagine). A helical membrane pass occupies residues 49–74 (LTLVCLAGLLMLFTVFGNVLVIIAVF). Residues 75 to 85 (TSRALKAPQNL) are Cytoplasmic-facing. Residues 86-111 (FLVSLASADILVATLVIPFSLANEVM) form a helical membrane-spanning segment. Topologically, residues 112-121 (GYWYFGKAWC) are extracellular. Cys121 and Cys203 form a disulfide bridge. The helical transmembrane segment at 122 to 144 (EIYLALDVLFCTSSIVHLCAISL) threads the bilayer. Residues 145–164 (DRYWSITQAIEYNLKRTPRR) lie on the Cytoplasmic side of the membrane. The helical transmembrane segment at 165 to 188 (IKAIIVTVWVISAVISFPPLISIE) threads the bilayer. At 189–207 (KKAGGGGQQPAEPRCEIND) the chain is on the extracellular side. Residues 208 to 232 (QKWYVISSCIGSFFAPCLIMILVYV) traverse the membrane as a helical segment. Residues 233-389 (RIYQIAKRRT…RQNREKRFTF (157 aa)) are Cytoplasmic-facing. Residues 242–377 (TRVPPSRRGP…RGGVAKASRW (136 aa)) form a disordered region. Residues 313–330 (SSEHAERPPGPRRSERGP) are compositionally biased toward basic and acidic residues. Ser346 bears the Phosphoserine mark. Arg368 bears the Omega-N-methylarginine mark. A helical transmembrane segment spans residues 390 to 414 (VLAVVIGVFVVCWFPFFFTYTLTAV). Over 415–424 (GCSVPPTLFK) the chain is Extracellular. A helical transmembrane segment spans residues 425 to 445 (FFFWFGYCNSSLNPVIYTIFN). At 446-465 (HDFRRAFKKILCRGDRKRIV) the chain is on the cytoplasmic side. Residue Cys457 is the site of S-palmitoyl cysteine attachment.

This sequence belongs to the G-protein coupled receptor 1 family. Adrenergic receptor subfamily. ADRA2A sub-subfamily.

Its subcellular location is the cell membrane. Functionally, alpha-2 adrenergic receptors mediate the catecholamine-induced inhibition of adenylate cyclase through the action of G proteins. The sequence is that of Alpha-2A adrenergic receptor from Sus scrofa (Pig).